A 491-amino-acid chain; its full sequence is MDVRVRFCPSPTGTPHVGMIRTALFNWAYARHTGGKFLFRIEDTDAARDSEESYGQIIDALRWLRLDWDEGVEVGGPHAPYRQSQRSSIYRELIEKLTASGHIYESFATGEEVEAHNIALGRDPKLGYDNFERDLTDAQKAAHRAEGREPALRLRVPDEDLSFDDLVRGEITFSAGSFSDFVVVRPNRQPLYTFVNPVDDALMGVTHVLRGEDLLSSTPRQIALYHALIETGVTTFVPRFGHLPYVMGEGNKKLSKRDPESNLFHHRDRGFIPEGLVNYLTLLGWSLSHDRDVFSIDEMVAAFDVGDVNPNPARFDQKKAESINGDHIRLLEVGDFAERTIPYLVAAGVLTEPITETQRAVLAEAAPLVQERVQLLGETPGMLGFLFAEAASVTIEDDARASLPANAGEALAASIGALELVPEAEWAHEAIEATLRDALVETLGFKPRIAFGPLRVALSGRRVSPPLFESMAILGKAETLARLVRLSAALG.

The 'HIGH' region signature appears at 9 to 19; sequence PSPTGTPHVGM. Positions 253 to 257 match the 'KMSKS' region motif; sequence KLSKR. Position 256 (lysine 256) interacts with ATP.

This sequence belongs to the class-I aminoacyl-tRNA synthetase family. Glutamate--tRNA ligase type 1 subfamily. Monomer.

The protein localises to the cytoplasm. The catalysed reaction is tRNA(Glu) + L-glutamate + ATP = L-glutamyl-tRNA(Glu) + AMP + diphosphate. In terms of biological role, catalyzes the attachment of glutamate to tRNA(Glu) in a two-step reaction: glutamate is first activated by ATP to form Glu-AMP and then transferred to the acceptor end of tRNA(Glu). This chain is Glutamate--tRNA ligase, found in Leifsonia xyli subsp. xyli (strain CTCB07).